The primary structure comprises 1023 residues: Peroxisome proliferator-activated receptor gamma coactivator 1-beta (1023 aa).

Residues 1-91 (MAGNDCGALL…LFQIDSENEA (91 aa)) form an abolishes DNA transcriptional activity when missing region. Residues 122-148 (LSCTSASPAPSSAPPSPAPEKPSAPAP) form a disordered region. The segment covering 132-146 (SSAPPSPAPEKPSAP) has biased composition (pro residues). Residues 156 to 160 (LQKLL) carry the LXXLL motif 1 motif. Disordered stretches follow at residues 165–210 (YPTS…QSQS), 237–278 (LQSP…PGAP), and 302–331 (RKLPPQTPEPLPKACSNPSQQVRSRPWSRH). The LXXLL motif 2 signature appears at 343 to 347 (LRELL). 4 disordered regions span residues 369 to 463 (LTPR…LPWT), 520 to 567 (RELG…QLPP), 601 to 623 (TAGLTPPTTPPYKPTEEDPFKPD), and 636 to 683 (LPSP…GQKR). Ser-384 is modified (phosphoserine). Residues 412 to 422 (LRLEVKREVRR) show a composition bias toward basic and acidic residues. Positions 429-450 (QEEEDEEEEEEEEEEEKEEEEE) are enriched in acidic residues. A Phosphoserine modification is found at Ser-524. Basic and acidic residues predominate over residues 614 to 623 (PTEEDPFKPD). Residue Ser-638 is modified to Phosphoserine. The HCFC1-binding-motif (HBM) motif lies at 691–694 (DHDY). Disordered regions lie at residues 717–758 (VHLE…LRDH) and 779–867 (DLAS…WSPA). A compositionally biased stretch (low complexity) spans 793-805 (EDSSSSSGESSFL). Positions 806 to 825 (PEEEEEEGEEEEEDDEEEDS) are enriched in acidic residues. A compositionally biased stretch (low complexity) spans 849-866 (CSRSRSSSGSSPCHSWSP). One can recognise an RRM domain in the interval 902 to 976 (RVVYIQNLSS…RNEPSFQLSY (75 aa)).

In terms of assembly, interacts with hepatocyte nuclear factor 4-alpha/HNF4A, Sterol regulatory binding transcription factor 1/SREBF1, PPAR-alpha/PPARA, thyroid hormone receptor beta/THRB and host cell factor/HCFC1. Interacts with estrogen-related receptor gamma/ESRRG and alpha/ESRRA. Interacts with PRDM16. Interacts with estrogen receptor alpha/ESR1. In terms of tissue distribution, ubiquitous with higher expression in heart, brain and skeletal muscle.

The protein resides in the nucleus. Its function is as follows. Plays a role of stimulator of transcription factors and nuclear receptors activities. Activates transcriptional activity of estrogen receptor alpha, nuclear respiratory factor 1 (NRF1) and glucocorticoid receptor in the presence of glucocorticoids. May play a role in constitutive non-adrenergic-mediated mitochondrial biogenesis as suggested by increased basal oxygen consumption and mitochondrial number when overexpressed. May be involved in fat oxidation and non-oxidative glucose metabolism and in the regulation of energy expenditure. Induces the expression of PERM1 in the skeletal muscle in an ESRRA-dependent manner. In Homo sapiens (Human), this protein is Peroxisome proliferator-activated receptor gamma coactivator 1-beta (PPARGC1B).